Reading from the N-terminus, the 235-residue chain is Probable membrane-associated kinase regulator 6 (235 aa).

Positions 108–140 are disordered; it reads SAATEEESEPLDTTTSEKIDTRGLNSKPSPTSS. Positions 130–140 are enriched in polar residues; that stretch reads GLNSKPSPTSS.

It localises to the cell membrane. Functionally, may be involved in abscisic acid signaling by acting as a kinase regulator. This chain is Probable membrane-associated kinase regulator 6 (MAKR6), found in Arabidopsis thaliana (Mouse-ear cress).